Here is a 302-residue protein sequence, read N- to C-terminus: Ornithine carbamoyltransferase (302 aa).

Carbamoyl phosphate contacts are provided by residues 53–56 (STRT), Gln-80, Arg-104, and 131–134 (HPCQ). L-ornithine-binding positions include Asn-162, Asp-219, and 223 to 224 (SM). Carbamoyl phosphate-binding positions include 259-260 (CL) and Arg-287.

The protein belongs to the aspartate/ornithine carbamoyltransferase superfamily. OTCase family.

The protein localises to the cytoplasm. It catalyses the reaction carbamoyl phosphate + L-ornithine = L-citrulline + phosphate + H(+). It functions in the pathway amino-acid biosynthesis; L-arginine biosynthesis; L-arginine from L-ornithine and carbamoyl phosphate: step 1/3. Functionally, reversibly catalyzes the transfer of the carbamoyl group from carbamoyl phosphate (CP) to the N(epsilon) atom of ornithine (ORN) to produce L-citrulline. The protein is Ornithine carbamoyltransferase of Hydrogenovibrio crunogenus (strain DSM 25203 / XCL-2) (Thiomicrospira crunogena).